The chain runs to 234 residues: Purine nucleoside phosphorylase DeoD-type (234 aa).

An a purine D-ribonucleoside-binding site is contributed by His5. Phosphate-binding positions include Gly21, Arg25, Arg44, and 88-91; that span reads RVGT. Residues 178–180 and 202–203 contribute to the a purine D-ribonucleoside site; these read EME and SD. The active-site Proton donor is Asp203.

This sequence belongs to the PNP/UDP phosphorylase family. In terms of assembly, homohexamer; trimer of homodimers.

The enzyme catalyses a purine D-ribonucleoside + phosphate = a purine nucleobase + alpha-D-ribose 1-phosphate. It carries out the reaction a purine 2'-deoxy-D-ribonucleoside + phosphate = a purine nucleobase + 2-deoxy-alpha-D-ribose 1-phosphate. Its function is as follows. Catalyzes the reversible phosphorolytic breakdown of the N-glycosidic bond in the beta-(deoxy)ribonucleoside molecules, with the formation of the corresponding free purine bases and pentose-1-phosphate. This is Purine nucleoside phosphorylase DeoD-type from Lactococcus lactis subsp. cremoris (strain MG1363).